The sequence spans 159 residues: Phosphopantetheine adenylyltransferase (159 aa).

Ser8 lines the substrate pocket. ATP-binding positions include 8–9 and His16; that span reads SF. Substrate contacts are provided by Lys40, Leu72, and Arg86. ATP contacts are provided by residues 87 to 89, Glu97, and 122 to 128; these read GLR and YSFISSS.

This sequence belongs to the bacterial CoaD family. As to quaternary structure, homohexamer. It depends on Mg(2+) as a cofactor.

It localises to the cytoplasm. It catalyses the reaction (R)-4'-phosphopantetheine + ATP + H(+) = 3'-dephospho-CoA + diphosphate. Its pathway is cofactor biosynthesis; coenzyme A biosynthesis; CoA from (R)-pantothenate: step 4/5. Reversibly transfers an adenylyl group from ATP to 4'-phosphopantetheine, yielding dephospho-CoA (dPCoA) and pyrophosphate. This chain is Phosphopantetheine adenylyltransferase, found in Thermosipho melanesiensis (strain DSM 12029 / CIP 104789 / BI429).